A 525-amino-acid polypeptide reads, in one-letter code: GMP synthase [glutamine-hydrolyzing] (525 aa).

A Glutamine amidotransferase type-1 domain is found at 9 to 207 (RILILDFGSQ…VRDICQCEAL (199 aa)). Residue Cys-86 is the Nucleophile of the active site. Residues His-181 and Glu-183 contribute to the active site. The GMPS ATP-PPase domain occupies 208-400 (WTPAKIIDDA…LGLPYDMLYR (193 aa)). 235–241 (SGGVDSS) contacts ATP.

Homodimer.

The catalysed reaction is XMP + L-glutamine + ATP + H2O = GMP + L-glutamate + AMP + diphosphate + 2 H(+). It functions in the pathway purine metabolism; GMP biosynthesis; GMP from XMP (L-Gln route): step 1/1. Catalyzes the synthesis of GMP from XMP. This chain is GMP synthase [glutamine-hydrolyzing], found in Klebsiella pneumoniae (strain 342).